Consider the following 220-residue polypeptide: Fructose-6-phosphate aldolase 2 (220 aa).

Lys-85 acts as the Schiff-base intermediate with substrate in catalysis.

The protein belongs to the transaldolase family. Type 3A subfamily. Homodecamer.

The protein resides in the cytoplasm. The enzyme catalyses beta-D-fructose 6-phosphate = dihydroxyacetone + D-glyceraldehyde 3-phosphate. Functionally, catalyzes the reversible formation of fructose 6-phosphate from dihydroxyacetone and D-glyceraldehyde 3-phosphate via an aldolization reaction. Can utilize hydroxyacetone as an alternative donor substrate. Is also able to catalyze the direct self-aldol addition of glycolaldehyde. Is less catalytically efficient than the isozyme FsaA. Does not display transaldolase activity. This is Fructose-6-phosphate aldolase 2 (fsaB) from Escherichia coli (strain K12).